Reading from the N-terminus, the 231-residue chain is MADLPETPAFGAAFSDEEEAARALEAGRWLFSQTCSFVMGCVSLDTLPDHDLSEIAFAGRSNVGKSSLVNALTGRKTLARTSNTPGRTQELNYFRLGPEAQDPALMMVDLPGYGFAEAPKDAVKRWTRLIMAYLRGRPALRRVCLLIDSRHGIKENDRDVMRMLDEAAVSYQIVLTKADKLKAAEITDVLARVVAETAKHVAAHPDVIVTSSQSGAGIDLLRAQLAALASP.

One can recognise an EngB-type G domain in the interval 51–231; the sequence is DLSEIAFAGR…RAQLAALASP (181 aa). Residues 59–66, 86–90, 109–112, 176–179, and 210–212 each bind GTP; these read GRSNVGKS, GRTQE, DLPG, TKAD, and TSS. Mg(2+) is bound by residues serine 66 and threonine 88.

The protein belongs to the TRAFAC class TrmE-Era-EngA-EngB-Septin-like GTPase superfamily. EngB GTPase family. It depends on Mg(2+) as a cofactor.

Functionally, necessary for normal cell division and for the maintenance of normal septation. This Rhodospirillum rubrum (strain ATCC 11170 / ATH 1.1.1 / DSM 467 / LMG 4362 / NCIMB 8255 / S1) protein is Probable GTP-binding protein EngB.